The chain runs to 219 residues: ATP-dependent Clp protease proteolytic subunit (219 aa).

Residues 1–22 are disordered; the sequence is MPVGVPKVPFLNPNPDPEPDSV. The active-site Nucleophile is Ser116. The active site involves His141.

This sequence belongs to the peptidase S14 family. In terms of assembly, component of the chloroplastic Clp protease core complex.

It localises to the plastid. The protein resides in the chloroplast stroma. It catalyses the reaction Hydrolysis of proteins to small peptides in the presence of ATP and magnesium. alpha-casein is the usual test substrate. In the absence of ATP, only oligopeptides shorter than five residues are hydrolyzed (such as succinyl-Leu-Tyr-|-NHMec, and Leu-Tyr-Leu-|-Tyr-Trp, in which cleavage of the -Tyr-|-Leu- and -Tyr-|-Trp bonds also occurs).. Functionally, cleaves peptides in various proteins in a process that requires ATP hydrolysis. Has a chymotrypsin-like activity. Plays a major role in the degradation of misfolded proteins. The polypeptide is ATP-dependent Clp protease proteolytic subunit (Pelargonium hortorum (Common geranium)).